The primary structure comprises 197 residues: Probable molybdenum cofactor guanylyltransferase (197 aa).

Residues 10-12, Lys22, Asp73, and Asp102 each bind GTP; that span reads LCG. Position 102 (Asp102) interacts with Mg(2+).

The protein belongs to the MobA family. Requires Mg(2+) as cofactor.

It is found in the cytoplasm. It catalyses the reaction Mo-molybdopterin + GTP + H(+) = Mo-molybdopterin guanine dinucleotide + diphosphate. Its function is as follows. Transfers a GMP moiety from GTP to Mo-molybdopterin (Mo-MPT) cofactor (Moco or molybdenum cofactor) to form Mo-molybdopterin guanine dinucleotide (Mo-MGD) cofactor. The chain is Probable molybdenum cofactor guanylyltransferase from Methanothermobacter thermautotrophicus (strain ATCC 29096 / DSM 1053 / JCM 10044 / NBRC 100330 / Delta H) (Methanobacterium thermoautotrophicum).